Reading from the N-terminus, the 452-residue chain is UDP-N-acetylmuramoylalanine--D-glutamate ligase (452 aa).

Gly-119–Thr-125 serves as a coordination point for ATP.

Belongs to the MurCDEF family.

It localises to the cytoplasm. The catalysed reaction is UDP-N-acetyl-alpha-D-muramoyl-L-alanine + D-glutamate + ATP = UDP-N-acetyl-alpha-D-muramoyl-L-alanyl-D-glutamate + ADP + phosphate + H(+). The protein operates within cell wall biogenesis; peptidoglycan biosynthesis. In terms of biological role, cell wall formation. Catalyzes the addition of glutamate to the nucleotide precursor UDP-N-acetylmuramoyl-L-alanine (UMA). The protein is UDP-N-acetylmuramoylalanine--D-glutamate ligase of Streptococcus pyogenes serotype M12 (strain MGAS9429).